Reading from the N-terminus, the 300-residue chain is L-arabinolactonase (300 aa).

3 residues coordinate a divalent metal cation: glutamate 22, asparagine 156, and aspartate 205.

It belongs to the SMP-30/CGR1 family. The cofactor is a divalent metal cation.

It carries out the reaction L-arabinono-1,4-lactone + H2O = L-arabinonate + H(+). In terms of biological role, catalyzes the cleavage of L-arabino-gamma-lactone to L-arabonate. Is involved in a degradation pathway of L-arabinose that allows A.brasilense to grow on L-arabinose as a sole carbon source. Can also use D-galactono-1,4-lactone as substrate in vitro; however, the enzyme is probably not involved in the metabolism of D-galactose in vivo. The protein is L-arabinolactonase (araB) of Azospirillum brasilense.